Here is an 82-residue protein sequence, read N- to C-terminus: ATP synthase subunit c (82 aa).

2 consecutive transmembrane segments (helical) span residues 18 to 38 (LGEA…IGKI) and 61 to 81 (IIAA…CGFL).

This sequence belongs to the ATPase C chain family. As to quaternary structure, F-type ATPases have 2 components, F(1) - the catalytic core - and F(0) - the membrane proton channel. F(1) has five subunits: alpha(3), beta(3), gamma(1), delta(1), epsilon(1). F(0) has three main subunits: a(1), b(2) and c(10-14). The alpha and beta chains form an alternating ring which encloses part of the gamma chain. F(1) is attached to F(0) by a central stalk formed by the gamma and epsilon chains, while a peripheral stalk is formed by the delta and b chains.

It is found in the cell inner membrane. Functionally, f(1)F(0) ATP synthase produces ATP from ADP in the presence of a proton or sodium gradient. F-type ATPases consist of two structural domains, F(1) containing the extramembraneous catalytic core and F(0) containing the membrane proton channel, linked together by a central stalk and a peripheral stalk. During catalysis, ATP synthesis in the catalytic domain of F(1) is coupled via a rotary mechanism of the central stalk subunits to proton translocation. Its function is as follows. Key component of the F(0) channel; it plays a direct role in translocation across the membrane. A homomeric c-ring of between 10-14 subunits forms the central stalk rotor element with the F(1) delta and epsilon subunits. This Azobacteroides pseudotrichonymphae genomovar. CFP2 protein is ATP synthase subunit c.